The primary structure comprises 421 residues: Serine hydroxymethyltransferase (421 aa).

Residues Leu-118 and 122–124 each bind (6S)-5,6,7,8-tetrahydrofolate; that span reads GHL. An N6-(pyridoxal phosphate)lysine modification is found at Lys-226.

The protein belongs to the SHMT family. As to quaternary structure, homodimer. It depends on pyridoxal 5'-phosphate as a cofactor.

The protein resides in the cytoplasm. The enzyme catalyses (6R)-5,10-methylene-5,6,7,8-tetrahydrofolate + glycine + H2O = (6S)-5,6,7,8-tetrahydrofolate + L-serine. Its pathway is one-carbon metabolism; tetrahydrofolate interconversion. It functions in the pathway amino-acid biosynthesis; glycine biosynthesis; glycine from L-serine: step 1/1. Functionally, catalyzes the reversible interconversion of serine and glycine with tetrahydrofolate (THF) serving as the one-carbon carrier. This reaction serves as the major source of one-carbon groups required for the biosynthesis of purines, thymidylate, methionine, and other important biomolecules. Also exhibits THF-independent aldolase activity toward beta-hydroxyamino acids, producing glycine and aldehydes, via a retro-aldol mechanism. The chain is Serine hydroxymethyltransferase from Mycoplasmopsis agalactiae (strain NCTC 10123 / CIP 59.7 / PG2) (Mycoplasma agalactiae).